A 41-amino-acid chain; its full sequence is U-megalopygitoxin(11)-Mo28 (41 aa).

The signal sequence occupies residues 1 to 29; sequence MRTTLLLLIIAITVMVFVSEAYAAPAPEP.

The protein belongs to the caterpillar 11 family. As to expression, expressed by the venom apparatus.

The protein resides in the secreted. In terms of biological role, probable toxin. The polypeptide is U-megalopygitoxin(11)-Mo28 (Megalopyge opercularis (Southern flannel moth)).